Consider the following 69-residue polypeptide: Nodulin-3 (69 aa).

The first 24 residues, methionine 1–alanine 24, serve as a signal peptide directing secretion.

The protein is Nodulin-3 (ENOD3) of Pisum sativum (Garden pea).